The sequence spans 490 residues: Serine/threonine-protein kinase PBL35 (490 aa).

2 disordered regions span residues 1-39 (MGFDSVKVMENWQSKTSNENEKKKKKRRRKKNNNVRNSE) and 80-103 (SAIVQSNDQPVGPVSSTTTTSNAE). Positions 14–39 (SKTSNENEKKKKKRRRKKNNNVRNSE) form a coiled coil. Residues 23-33 (KKKKRRRKKNN) are compositionally biased toward basic residues. A compositionally biased stretch (low complexity) spans 94 to 103 (SSTTTTSNAE). The 287-residue stretch at 136 to 422 (FRPESLLGEG…VEVLKPLPHL (287 aa)) folds into the Protein kinase domain. Residues 142-150 (LGEGGFGCV) and Lys-174 each bind ATP. Residue Tyr-219 is modified to Phosphotyrosine. Asp-269 (proton acceptor) is an active-site residue. A phosphoserine mark is found at Ser-273 and Ser-303. Residues Thr-304 and Thr-309 each carry the phosphothreonine modification. Tyr-317 is subject to Phosphotyrosine. Residues 442–490 (AGSGSGSGRGFGSRNGQPVFRTLSSPHGQAGSSPYRHQIPSPKPKGATT) are disordered. Over residues 444–454 (SGSGSGRGFGS) the composition is skewed to gly residues. Positions 463–473 (TLSSPHGQAGS) are enriched in polar residues.

The protein belongs to the protein kinase superfamily. Ser/Thr protein kinase family. As to quaternary structure, interacts with SD129. Post-translationally, phosphorylated by SD129 in response to the pathogen-associated molecular pattern (PAMP) 3-OH-C10:0, a medium-chain 3-hydroxy fatty acid.

The protein resides in the cell membrane. It catalyses the reaction L-seryl-[protein] + ATP = O-phospho-L-seryl-[protein] + ADP + H(+). The enzyme catalyses L-threonyl-[protein] + ATP = O-phospho-L-threonyl-[protein] + ADP + H(+). Functionally, involved in chitin-triggered immune signaling and is required for reactive oxygen species (ROS) production. Acts downstream of SD129 in defense signaling triggered by the pathogen-associated molecular pattern (PAMP) 3-OH-C10:0, a medium-chain 3-hydroxy fatty acid. The sequence is that of Serine/threonine-protein kinase PBL35 from Arabidopsis thaliana (Mouse-ear cress).